A 337-amino-acid chain; its full sequence is MMVKRTGAVLALLATAALSACGSTPVASTAGNYAKPIGTAPVTANPTDYSSALVCLNQYARTNRIVAPRIAIGRIADYTGKEESDGSGRKVTQGASLMAVSAFAKAGMPLVERFDTSVSEFELKYANNKLISDRPNPAPDAPADFRKILAGQVPGSDFYVIGGITELNYNIRSAGIDAYAGDKDTDGLKGNFRRRVFIMNIALDLRLVNTRTLEVVDVISYQKQVVGREVSAGVFDFLNGNLFDISAGRGALEPMQLAVRALIERATVEMAANLYGMPGPESCLRFDPFGDATVGQTGAFTPAYNNLGTNNAQTRDDPSRWNARRDPDIRDAKRGRY.

A compositionally biased stretch (polar residues) spans 303 to 313 (AYNNLGTNNAQ). The disordered stretch occupies residues 303–337 (AYNNLGTNNAQTRDDPSRWNARRDPDIRDAKRGRY). Basic and acidic residues predominate over residues 314 to 337 (TRDDPSRWNARRDPDIRDAKRGRY).

Required for the attachment of the holdfast to the cell. May be involved in the positive regulation of hfaC. In Caulobacter vibrioides (strain ATCC 19089 / CIP 103742 / CB 15) (Caulobacter crescentus), this protein is Putative transcription activator protein HfaB (hfaB).